The primary structure comprises 458 residues: tRNA modification GTPase MnmE (458 aa).

(6S)-5-formyl-5,6,7,8-tetrahydrofolate contacts are provided by R26, E88, and R127. The TrmE-type G domain occupies 224–378 (GLSTAIIGRP…IEDRINQLFF (155 aa)). Residue N234 coordinates K(+). Residues 234-239 (NVGKSS), 253-259 (TDIAGTT), and 278-281 (DTAG) contribute to the GTP site. Position 238 (S238) interacts with Mg(2+). K(+) is bound by residues T253, I255, and T258. T259 is a binding site for Mg(2+). K458 provides a ligand contact to (6S)-5-formyl-5,6,7,8-tetrahydrofolate.

It belongs to the TRAFAC class TrmE-Era-EngA-EngB-Septin-like GTPase superfamily. TrmE GTPase family. In terms of assembly, homodimer. Heterotetramer of two MnmE and two MnmG subunits. K(+) is required as a cofactor.

It is found in the cytoplasm. Exhibits a very high intrinsic GTPase hydrolysis rate. Involved in the addition of a carboxymethylaminomethyl (cmnm) group at the wobble position (U34) of certain tRNAs, forming tRNA-cmnm(5)s(2)U34. This is tRNA modification GTPase MnmE from Streptococcus pyogenes serotype M12 (strain MGAS9429).